A 157-amino-acid chain; its full sequence is Protein Smg homolog (157 aa).

It belongs to the Smg family.

The protein is Protein Smg homolog of Alkalilimnicola ehrlichii (strain ATCC BAA-1101 / DSM 17681 / MLHE-1).